A 150-amino-acid polypeptide reads, in one-letter code: Viral late gene transcription factor 2 (150 aa).

This sequence belongs to the chordopoxvirinae VLTF-2 family. In terms of assembly, interacts with itself. Interacts with the late transcription factors VLTF-1.

In terms of biological role, acts with RNA polymerase to initiate transcription from late gene promoters. The polypeptide is Viral late gene transcription factor 2 (VLTF2) (Homo sapiens (Human)).